The following is a 120-amino-acid chain: UPF0145 protein Mboo_1021 (120 aa).

This sequence belongs to the UPF0145 family.

This chain is UPF0145 protein Mboo_1021, found in Methanoregula boonei (strain DSM 21154 / JCM 14090 / 6A8).